A 247-amino-acid chain; its full sequence is Segregation and condensation protein A (247 aa).

Belongs to the ScpA family. Component of a cohesin-like complex composed of ScpA, ScpB and the Smc homodimer, in which ScpA and ScpB bind to the head domain of Smc. The presence of the three proteins is required for the association of the complex with DNA.

Its subcellular location is the cytoplasm. Functionally, participates in chromosomal partition during cell division. May act via the formation of a condensin-like complex containing Smc and ScpB that pull DNA away from mid-cell into both cell halves. The polypeptide is Segregation and condensation protein A (Bacillus anthracis (strain A0248)).